Reading from the N-terminus, the 539-residue chain is Probable malate:quinone oxidoreductase 3 (539 aa).

Residues 516-539 (LEPPVSPQRPESIRPADSQGVASR) form a disordered region.

Belongs to the MQO family. The cofactor is FAD.

It catalyses the reaction (S)-malate + a quinone = a quinol + oxaloacetate. The protein operates within carbohydrate metabolism; tricarboxylic acid cycle; oxaloacetate from (S)-malate (quinone route): step 1/1. This is Probable malate:quinone oxidoreductase 3 from Pseudomonas putida (strain ATCC 47054 / DSM 6125 / CFBP 8728 / NCIMB 11950 / KT2440).